The following is an 850-amino-acid chain: Mitogen-activated protein kinase kinase kinase 11 (850 aa).

At Ser11 the chain carries Phosphoserine. Residues 18 to 31 show a composition bias toward gly residues; the sequence is GSGSGGGGGSGGVR. The disordered stretch occupies residues 18 to 37; that stretch reads GSGSGGGGGSGGVRPEGSPK. A Phosphoserine modification is found at Ser35. The region spanning 42–106 is the SH3 domain; the sequence is YANPVWTALF…PSNYVSRGGG (65 aa). One can recognise a Protein kinase domain in the interval 118-380; the sequence is LRLEEVIGIG…ASILQQLEAL (263 aa). Residues 124 to 132 and Lys145 contribute to the ATP site; that span reads IGIGGFGKV. Asp242 (proton acceptor) is an active-site residue. Phosphothreonine; by autocatalysis is present on Thr278. A Phosphoserine; by autocatalysis and MAP4K1 modification is found at Ser282. Ser395 is modified (phosphoserine). Leucine-zipper regions lie at residues 404 to 425 and 439 to 460; these read IQGL…EEEL and LRRR…ELTL. Ser508, Ser525, Ser549, Ser556, and Ser557 each carry phosphoserine. Residues 536-850 are disordered; sequence LEPAESGQTW…QAPWAPEAGP (315 aa). The span at 551–563 shows a compositional bias: basic and acidic residues; the sequence is RRLDDSSNGERRA. Residues 598 to 610 are compositionally biased toward low complexity; the sequence is SSPLGSPSTPPAL. Ser655 carries the phosphoserine modification. Residues 677 to 693 are compositionally biased toward pro residues; it reads TAPPPAQMASPCPPDLP. The residue at position 712 (Thr712) is a Phosphothreonine. Residues Ser728, Ser731, Ser743, Ser751, Ser761, Ser773, Ser792, Ser796, and Ser818 each carry the phosphoserine modification. Residues 790–802 are compositionally biased toward pro residues; the sequence is RPSPLPSPQPAPR. A compositionally biased stretch (low complexity) spans 803 to 819; that stretch reads RAPWTLFPDSDPFWDSP.

It belongs to the protein kinase superfamily. STE Ser/Thr protein kinase family. MAP kinase kinase kinase subfamily. As to quaternary structure, homodimer; undergoes dimerization during activation. Interacts with MAP2K4/MKK4. Interacts with MAP2K7/MKK7. Found in a complex with SH3RF1, RAC1, MAP2K7/MKK7, MAPK8IP1/JIP1 and MAPK8/JNK1. Mg(2+) serves as cofactor. Autophosphorylation on serine and threonine residues within the activation loop plays a role in enzyme activation. Thr-278 is likely to be the main autophosphorylation site. Phosphorylation of Ser-556 and Ser-557 is induced by CDC42.

The protein localises to the cytoplasm. It localises to the cytoskeleton. The protein resides in the microtubule organizing center. Its subcellular location is the centrosome. It catalyses the reaction L-seryl-[protein] + ATP = O-phospho-L-seryl-[protein] + ADP + H(+). The enzyme catalyses L-threonyl-[protein] + ATP = O-phospho-L-threonyl-[protein] + ADP + H(+). Its activity is regulated as follows. Homodimerization via the leucine zipper domains is required for autophosphorylation and subsequent activation. Its function is as follows. Activates the JUN N-terminal pathway. Required for serum-stimulated cell proliferation and for mitogen and cytokine activation of MAPK14 (p38), MAPK3 (ERK) and MAPK8 (JNK1) through phosphorylation and activation of MAP2K4/MKK4 and MAP2K7/MKK7. Plays a role in mitogen-stimulated phosphorylation and activation of BRAF, but does not phosphorylate BRAF directly. Influences microtubule organization during the cell cycle. This Rattus norvegicus (Rat) protein is Mitogen-activated protein kinase kinase kinase 11 (Map3k11).